A 103-amino-acid chain; its full sequence is Pilin (103 aa).

The first 30 residues, 1 to 30 (MYRFACRTLMLAACILATGVAGLGVGAQSA), serve as a signal peptide directing secretion. A compositionally biased stretch (basic and acidic residues) spans 61-76 (HDDFHRDSDGPDHSRD). The segment at 61 to 103 (HDDFHRDSDGPDHSRDYPGPILEGPVLDDPGAAPPPPAAGGGA) is disordered. Residues 92–103 (AAPPPPAAGGGA) are compositionally biased toward pro residues.

The protein belongs to the mycobacterial pilin family. In terms of assembly, forms a homomer composed of subunits assembled in a large structure.

It localises to the fimbrium. Structural subunit of pili, which are thin, flexible, coiled-coil, aggregative fibers. Mediates adhesion to the extracellular matrix, an event that would facilitate direct interaction with the host epithelium during infection in the lung or other tissues. This chain is Pilin (mtp), found in Mycobacterium bovis (strain ATCC BAA-935 / AF2122/97).